The following is a 244-amino-acid chain: RNA transcription, translation and transport factor protein (244 aa).

N6-acetyllysine occurs at positions 20, 62, and 98.

The protein belongs to the RTRAF family. Homodimer. Interacts with FAM98A (via N- and C-terminus). Interacts with NIN; which may prevent phosphorylation of NIN. Interacts with POLR2A. Component of a tRNA-splicing ligase complex.

The protein resides in the nucleus. The protein localises to the cytoplasm. It localises to the cytosol. It is found in the perinuclear region. Its subcellular location is the cytoskeleton. The protein resides in the microtubule organizing center. The protein localises to the centrosome. Functionally, RNA-binding protein involved in modulation of mRNA transcription by Polymerase II. Component of the tRNA-splicing ligase complex and is required for tRNA ligation. May be required for RNA transport. This chain is RNA transcription, translation and transport factor protein, found in Mus musculus (Mouse).